The sequence spans 273 residues: Ribosomal RNA small subunit methyltransferase A (273 aa).

S-adenosyl-L-methionine contacts are provided by Asn-20, Leu-22, Gly-47, Glu-68, Asp-90, and Asn-110.

This sequence belongs to the class I-like SAM-binding methyltransferase superfamily. rRNA adenine N(6)-methyltransferase family. RsmA subfamily.

The protein localises to the cytoplasm. It catalyses the reaction adenosine(1518)/adenosine(1519) in 16S rRNA + 4 S-adenosyl-L-methionine = N(6)-dimethyladenosine(1518)/N(6)-dimethyladenosine(1519) in 16S rRNA + 4 S-adenosyl-L-homocysteine + 4 H(+). In terms of biological role, specifically dimethylates two adjacent adenosines (A1518 and A1519) in the loop of a conserved hairpin near the 3'-end of 16S rRNA in the 30S particle. May play a critical role in biogenesis of 30S subunits. In Chlorobium luteolum (strain DSM 273 / BCRC 81028 / 2530) (Pelodictyon luteolum), this protein is Ribosomal RNA small subunit methyltransferase A.